The primary structure comprises 353 residues: Methionine import ATP-binding protein MetN (353 aa).

The ABC transporter domain occupies 8–249 (LDQIDVTFHQ…PKQPLTQDFI (242 aa)). 42-49 (GYSGAGKS) serves as a coordination point for ATP.

This sequence belongs to the ABC transporter superfamily. Methionine importer (TC 3.A.1.24) family. In terms of assembly, the complex is composed of two ATP-binding proteins (MetN), two transmembrane proteins (MetI) and a solute-binding protein (MetQ).

Its subcellular location is the cell membrane. It catalyses the reaction L-methionine(out) + ATP + H2O = L-methionine(in) + ADP + phosphate + H(+). The catalysed reaction is D-methionine(out) + ATP + H2O = D-methionine(in) + ADP + phosphate + H(+). In terms of biological role, part of the ABC transporter complex MetNIQ involved in methionine import. Responsible for energy coupling to the transport system. In Streptococcus pneumoniae serotype 4 (strain ATCC BAA-334 / TIGR4), this protein is Methionine import ATP-binding protein MetN.